The primary structure comprises 79 residues: Small ribosomal subunit protein bS21 (79 aa).

The tract at residues 59 to 79 (RKKMQREGLLPMKPKPVVGVR) is disordered.

It belongs to the bacterial ribosomal protein bS21 family.

The chain is Small ribosomal subunit protein bS21 from Methylocella silvestris (strain DSM 15510 / CIP 108128 / LMG 27833 / NCIMB 13906 / BL2).